Here is a 208-residue protein sequence, read N- to C-terminus: MAKFIKSAQYFDQYPVDKQFEICVIGRSNVGKSSLINALANEKIARTSNTPGRTQLVNFFDFNSFRLVDLPGYGFARVSKDKQLDLATIIDQYLGYRQNLCAVFQICDINVLTNDDVEMSRYFENQNYAHFVVLNKVDKVNKSHFDNNKQKIAKFLNISVDRLLCVSAQKNTNVATLFALMKKVVIETRQKQLLLKKEEKKSSEEEIK.

The EngB-type G domain maps to 18–187; sequence KQFEICVIGR…FALMKKVVIE (170 aa). GTP contacts are provided by residues 26–33, 52–56, 69–72, 135–138, and 166–168; these read GRSNVGKS, GRTQL, DLPG, NKVD, and VSA. Residues Ser-33 and Thr-54 each contribute to the Mg(2+) site.

It belongs to the TRAFAC class TrmE-Era-EngA-EngB-Septin-like GTPase superfamily. EngB GTPase family. It depends on Mg(2+) as a cofactor.

In terms of biological role, necessary for normal cell division and for the maintenance of normal septation. The sequence is that of Probable GTP-binding protein EngB from Ureaplasma urealyticum serovar 10 (strain ATCC 33699 / Western).